We begin with the raw amino-acid sequence, 93 residues long: uncharacterized protein (93 aa).

Residues 25 to 68 (DIKKLSQVKSELEQGKALLEEEKKELIEKNSNLNLQISNMNHLK) adopt a coiled-coil conformation.

This is an uncharacterized protein from Dictyostelium discoideum (Social amoeba).